We begin with the raw amino-acid sequence, 660 residues long: Bifunctional polymyxin resistance protein ArnA (660 aa).

The interval Met1 to Leu304 is formyltransferase ArnAFT. Residue His104 is the Proton donor; for formyltransferase activity of the active site. Residues Arg114 and Val136 to Asp140 contribute to the (6R)-10-formyltetrahydrofolate site. The dehydrogenase ArnADH stretch occupies residues Arg314 to Ser660. NAD(+) is bound by residues Asp347 and Asp368–Ile369. UDP-alpha-D-glucuronate-binding positions include Ala393, Tyr398, and Thr432–Ser433. The active-site Proton acceptor; for decarboxylase activity is Glu434. Residues Arg460, Asn492, Lys526–Arg535, and Tyr613 each bind UDP-alpha-D-glucuronate. The active-site Proton donor; for decarboxylase activity is the Arg619.

This sequence in the N-terminal section; belongs to the Fmt family. UDP-L-Ara4N formyltransferase subfamily. In the C-terminal section; belongs to the NAD(P)-dependent epimerase/dehydratase family. UDP-glucuronic acid decarboxylase subfamily. Homohexamer, formed by a dimer of trimers.

It carries out the reaction UDP-alpha-D-glucuronate + NAD(+) = UDP-beta-L-threo-pentopyranos-4-ulose + CO2 + NADH. The enzyme catalyses UDP-4-amino-4-deoxy-beta-L-arabinose + (6R)-10-formyltetrahydrofolate = UDP-4-deoxy-4-formamido-beta-L-arabinose + (6S)-5,6,7,8-tetrahydrofolate + H(+). Its pathway is nucleotide-sugar biosynthesis; UDP-4-deoxy-4-formamido-beta-L-arabinose biosynthesis; UDP-4-deoxy-4-formamido-beta-L-arabinose from UDP-alpha-D-glucuronate: step 1/3. The protein operates within nucleotide-sugar biosynthesis; UDP-4-deoxy-4-formamido-beta-L-arabinose biosynthesis; UDP-4-deoxy-4-formamido-beta-L-arabinose from UDP-alpha-D-glucuronate: step 3/3. It functions in the pathway bacterial outer membrane biogenesis; lipopolysaccharide biosynthesis. In terms of biological role, bifunctional enzyme that catalyzes the oxidative decarboxylation of UDP-glucuronic acid (UDP-GlcUA) to UDP-4-keto-arabinose (UDP-Ara4O) and the addition of a formyl group to UDP-4-amino-4-deoxy-L-arabinose (UDP-L-Ara4N) to form UDP-L-4-formamido-arabinose (UDP-L-Ara4FN). The modified arabinose is attached to lipid A and is required for resistance to polymyxin and cationic antimicrobial peptides. The protein is Bifunctional polymyxin resistance protein ArnA of Salmonella choleraesuis (strain SC-B67).